The following is a 152-amino-acid chain: Cytochrome c-type biogenesis CcmH-like mitochondrial protein (152 aa).

The Mitochondrial intermembrane segment spans residues 1-83 (MATEEDVKQR…ILYTPKFDLQ (83 aa)). Heme-binding residues include Cys-26 and Cys-29. Residues 84–104 (TAAIWLSPVIVGGVAAGVWAY) form a helical membrane-spanning segment. Over 105 to 152 (QKHRQRTNVHIMALNLVRGVPLTPREKETMLDVLTPPPPANKWWWPGK) the chain is Mitochondrial matrix.

It belongs to the CcmH/CycL/Ccl2/NrfF family.

It is found in the mitochondrion inner membrane. In terms of biological role, plays a role in mitochondrial cytochrome c maturation. Probable component of a heme lyase complex involved in the reduction of apocytochrome c. The sequence is that of Cytochrome c-type biogenesis CcmH-like mitochondrial protein from Oryza sativa subsp. japonica (Rice).